Here is a 69-residue protein sequence, read N- to C-terminus: Small ribosomal subunit protein bS21 (69 aa).

The tract at residues isoleucine 49–alanine 69 is disordered.

Belongs to the bacterial ribosomal protein bS21 family.

In Leptospira borgpetersenii serovar Hardjo-bovis (strain JB197), this protein is Small ribosomal subunit protein bS21.